The sequence spans 184 residues: Putative manganese efflux pump MntP (184 aa).

Helical transmembrane passes span 39–59, 65–85, 102–122, 132–152, and 161–181; these read IFGVFQALMPFLGYILGLSFV, IDHFIAFGILGFLGAKMILEA, LALGAVATSIDALAVGITFSF, LIIGTVCFVLCTAACYVGKIL, and LVLGGLILIGLGTKILITHLV.

Belongs to the MntP (TC 9.B.29) family.

The protein localises to the cell inner membrane. In terms of biological role, probably functions as a manganese efflux pump. The chain is Putative manganese efflux pump MntP from Campylobacter curvus (strain 525.92).